The sequence spans 136 residues: Small ribosomal subunit protein bS6 (136 aa).

The disordered stretch occupies residues 99–136 (QSEMLKAEENRSERRERRERPEHGGHEGLDGDSDKADE). A compositionally biased stretch (basic and acidic residues) spans 103–136 (LKAEENRSERRERRERPEHGGHEGLDGDSDKADE).

This sequence belongs to the bacterial ribosomal protein bS6 family.

Its function is as follows. Binds together with bS18 to 16S ribosomal RNA. The sequence is that of Small ribosomal subunit protein bS6 from Azotobacter vinelandii (strain DJ / ATCC BAA-1303).